Here is a 470-residue protein sequence, read N- to C-terminus: ADAM DEC1 (470 aa).

Residues 1 to 30 form the signal peptide; the sequence is MLRGISQLPAVATMSWVLLPVLWLIVQTQA. A propeptide spanning residues 31–205 is cleaved from the precursor; the sequence is IAIKQTPELT…QGPIRISRSL (175 aa). N61 is a glycosylation site (N-linked (GlcNAc...) asparagine). A disordered region spans residues 173 to 200; sequence FTSNQEEQDPANHTCGVKSTDGKQGPIR. An N-linked (GlcNAc...) (complex) asparagine glycan is attached at N184. Residues 218-412 form the Peptidase M12B domain; it reads KYIDLYLVLD…QKPKCLLQAP (195 aa). Residue N237 is glycosylated (N-linked (GlcNAc...) asparagine). Intrachain disulfides connect C328–C407 and C369–C374. Zn(2+) is bound at residue H352. E353 is an active-site residue. Zn(2+)-binding residues include H356 and D362. Residues 420–470 form the Disintegrin domain; the sequence is TPVCGNHLLEVGEDCDCGSPKECTNLCCEALTCKLKPGTDCGGDAPNHTTE. N466 carries N-linked (GlcNAc...) asparagine glycosylation.

Zn(2+) is required as a cofactor. Expressed highly in the small intestine and appendix, moderately in lymph node, mucosal lining of the colon, thymus, spleen and very weakly in the bone marrow. Predominantly expressed in dendritic cells (DC) of the germinal center. Weakly expressed in monocyte and highly expressed in macrophage. Absent in immature DC.

The protein resides in the secreted. Functionally, may play an important role in the control of the immune response and during pregnancy. This Homo sapiens (Human) protein is ADAM DEC1 (ADAMDEC1).